The primary structure comprises 162 residues: Ribosome maturation factor RimP (162 aa).

Belongs to the RimP family.

It localises to the cytoplasm. In terms of biological role, required for maturation of 30S ribosomal subunits. This chain is Ribosome maturation factor RimP, found in Leptospira borgpetersenii serovar Hardjo-bovis (strain JB197).